The primary structure comprises 276 residues: NH(3)-dependent NAD(+) synthetase (276 aa).

43–50 is an ATP binding site; the sequence is GISGGVDS. Aspartate 49 contributes to the Mg(2+) binding site. Arginine 146 provides a ligand contact to deamido-NAD(+). An ATP-binding site is contributed by threonine 166. Glutamate 171 is a Mg(2+) binding site. Positions 179 and 186 each coordinate deamido-NAD(+). ATP-binding residues include lysine 195 and threonine 217. 266–267 contacts deamido-NAD(+); that stretch reads HK.

This sequence belongs to the NAD synthetase family. In terms of assembly, homodimer.

It catalyses the reaction deamido-NAD(+) + NH4(+) + ATP = AMP + diphosphate + NAD(+) + H(+). The protein operates within cofactor biosynthesis; NAD(+) biosynthesis; NAD(+) from deamido-NAD(+) (ammonia route): step 1/1. Catalyzes the ATP-dependent amidation of deamido-NAD to form NAD. Uses ammonia as a nitrogen source. This chain is NH(3)-dependent NAD(+) synthetase, found in Vibrio campbellii (strain ATCC BAA-1116).